The primary structure comprises 1063 residues: ATP-dependent helicase hrq1 (1063 aa).

The interval 224–243 (TQSRKNQPVPPDSPSIPNDS) is disordered. Residues 320–503 (INHLWNGFHV…KIFGVDNIKL (184 aa)) form the Helicase ATP-binding domain. Residue 333-340 (TSTSSGKS) participates in ATP binding. Residues 444-447 (DEAH) carry the DEAH box motif. Residues 539–717 (EASKLLIKFA…ELPINIRSDE (179 aa)) enclose the Helicase C-terminal domain.

The protein belongs to the helicase family. HRQ1 subfamily. In terms of assembly, forms heptamer rings. Interacts with rhp14. It depends on Mg(2+) as a cofactor.

The protein resides in the nucleus. The catalysed reaction is Couples ATP hydrolysis with the unwinding of duplex DNA by translocating in the 3'-5' direction.. It carries out the reaction ATP + H2O = ADP + phosphate + H(+). Its function is as follows. Helicase with 3'-5' helicase activity involved in genome stability. Functions in the nucleotide excision repair (NER) pathway and plays a critical role in DNA interstrand cross-link repair. Unwinds relatively long duplex DNA up to 120-bp and requires a long 3'-tail of at least 70 nucleotides for efficient unwinding of duplex DNA. Shows both processive helicase and DNA strand annealing activities. Affects telomere length by a non-catalytic mechanism, probably through inhibiting telomerase by competing with it for ssDNA binding. The polypeptide is ATP-dependent helicase hrq1 (Schizosaccharomyces pombe (strain 972 / ATCC 24843) (Fission yeast)).